Consider the following 67-residue polypeptide: Conotoxin Cl6.6a (67 aa).

An N-terminal signal peptide occupies residues Met1–Ala24. The propeptide occupies Thr25 to Pro37. 3 disulfides stabilise this stretch: Cys43/Cys57, Cys50/Cys61, and Cys56/Cys65.

The protein belongs to the conotoxin O1 superfamily. In terms of tissue distribution, expressed by the venom duct.

It is found in the secreted. The polypeptide is Conotoxin Cl6.6a (Californiconus californicus (California cone)).